We begin with the raw amino-acid sequence, 602 residues long: RecBCD enzyme subunit RecD (602 aa).

174–181 provides a ligand contact to ATP; the sequence is GGPGTGKT.

It belongs to the RecD family. Heterotrimer of RecB, RecC and RecD. All subunits contribute to DNA-binding.

It catalyses the reaction Couples ATP hydrolysis with the unwinding of duplex DNA at the replication fork by translocating in the 5'-3' direction. This creates two antiparallel DNA single strands (ssDNA). The leading ssDNA polymer is the template for DNA polymerase III holoenzyme which synthesizes a continuous strand.. The enzyme catalyses ATP + H2O = ADP + phosphate + H(+). In terms of biological role, a helicase/nuclease that prepares dsDNA breaks (DSB) for recombinational DNA repair. Binds to DSBs and unwinds DNA via a highly rapid and processive ATP-dependent bidirectional helicase activity. Unwinds dsDNA until it encounters a Chi (crossover hotspot instigator) sequence from the 3' direction. Cuts ssDNA a few nucleotides 3' to the Chi site. The properties and activities of the enzyme are changed at Chi. The Chi-altered holoenzyme produces a long 3'-ssDNA overhang and facilitates RecA-binding to the ssDNA for homologous DNA recombination and repair. Holoenzyme degrades any linearized DNA that is unable to undergo homologous recombination. In the holoenzyme this subunit has ssDNA-dependent ATPase and 5'-3' helicase activity. When added to pre-assembled RecBC greatly stimulates nuclease activity and augments holoenzyme processivity. Negatively regulates the RecA-loading ability of RecBCD. This chain is RecBCD enzyme subunit RecD, found in Buchnera aphidicola subsp. Schizaphis graminum (strain Sg).